We begin with the raw amino-acid sequence, 305 residues long: Homoserine kinase (305 aa).

93–103 (PLARGLGSSAT) contacts ATP.

It belongs to the GHMP kinase family. Homoserine kinase subfamily.

It localises to the cytoplasm. It catalyses the reaction L-homoserine + ATP = O-phospho-L-homoserine + ADP + H(+). The protein operates within amino-acid biosynthesis; L-threonine biosynthesis; L-threonine from L-aspartate: step 4/5. Catalyzes the ATP-dependent phosphorylation of L-homoserine to L-homoserine phosphate. This chain is Homoserine kinase, found in Trichodesmium erythraeum (strain IMS101).